The following is a 550-amino-acid chain: Mycosin-2 (550 aa).

The first 33 residues, 1–33 (MASPLNRPGLRAAAASAALTLVALSANVPAAQA), serve as a signal peptide directing secretion. The interval 34–62 (IPPPSVDPAMVPADARPGPDQPMRRSNSC) is disordered. The Peptidase S8 domain maps to 79 to 490 (GFNLVNISKA…YGLVDPVAAL (412 aa)). Active-site charge relay system residues include aspartate 103 and histidine 133. The segment covering 168–190 (PPVTAAPAPPVEVPPPMPPPPPV) has biased composition (pro residues). The segment at 168 to 236 (PPVTAAPAPP…PPPPPGAPDG (69 aa)) is disordered. Serine 435 acts as the Charge relay system in catalysis. The chain crosses the membrane as a helical span at residues 524 to 544 (NIAIGFVGAVATGVLAMAIGA).

The protein belongs to the peptidase S8 family.

Its subcellular location is the cell membrane. This is Mycosin-2 from Mycobacterium tuberculosis (strain ATCC 25618 / H37Rv).